The sequence spans 315 residues: Ninja-family protein 1 (315 aa).

3 disordered regions span residues 1–28 (MASR…AGEA), 68–142 (SLPG…AQEP), and 156–237 (DQGN…TGDL). Basic and acidic residues predominate over residues 99-108 (ERWRRREMQS). The span at 156-166 (DQGNPSSSMPE) shows a compositional bias: polar residues. 2 stretches are compositionally biased toward low complexity: residues 184 to 197 (SSDN…QNKS) and 221 to 234 (LRTL…TTST).

Belongs to the Ninja family.

It localises to the nucleus. This is Ninja-family protein 1 (AFP-A1) from Triticum aestivum (Wheat).